The following is a 140-amino-acid chain: Translation initiation factor 2 subunit beta (140 aa).

It belongs to the eIF-2-beta/eIF-5 family. As to quaternary structure, heterotrimer composed of an alpha, a beta and a gamma chain.

Functionally, eIF-2 functions in the early steps of protein synthesis by forming a ternary complex with GTP and initiator tRNA. The polypeptide is Translation initiation factor 2 subunit beta (Pyrococcus furiosus (strain ATCC 43587 / DSM 3638 / JCM 8422 / Vc1)).